The following is a 505-amino-acid chain: AMP phosphorylase 2 (505 aa).

AMP-binding positions include Gly-169, 195–200 (SRAITT), Thr-204, Ser-265, and Lys-289.

The protein belongs to the thymidine/pyrimidine-nucleoside phosphorylase family. Type 2 subfamily.

The catalysed reaction is AMP + phosphate = alpha-D-ribose 1,5-bisphosphate + adenine. It carries out the reaction CMP + phosphate = cytosine + alpha-D-ribose 1,5-bisphosphate. It catalyses the reaction UMP + phosphate = alpha-D-ribose 1,5-bisphosphate + uracil. Catalyzes the conversion of AMP and phosphate to adenine and ribose 1,5-bisphosphate (R15P). Exhibits phosphorylase activity toward CMP and UMP in addition to AMP. Functions in an archaeal AMP degradation pathway, together with R15P isomerase and RubisCO. This is AMP phosphorylase 2 from Archaeoglobus fulgidus (strain ATCC 49558 / DSM 4304 / JCM 9628 / NBRC 100126 / VC-16).